Here is a 1279-residue protein sequence, read N- to C-terminus: ATP-dependent helicase/nuclease subunit A (1279 aa).

The region spanning 4–499 (TKWTDEQRQA…VKLFKNFRSR (496 aa)) is the UvrD-like helicase ATP-binding domain. Residue 25-32 (AGAGAGKT) coordinates ATP. The UvrD-like helicase C-terminal domain occupies 526–853 (EEALKVGASY…RIMSIHKSKG (328 aa)).

Belongs to the helicase family. AddA subfamily. In terms of assembly, heterodimer of AddA and AddB/RexB. Requires Mg(2+) as cofactor.

It carries out the reaction Couples ATP hydrolysis with the unwinding of duplex DNA by translocating in the 3'-5' direction.. The enzyme catalyses ATP + H2O = ADP + phosphate + H(+). The heterodimer acts as both an ATP-dependent DNA helicase and an ATP-dependent, dual-direction single-stranded exonuclease. Recognizes the chi site generating a DNA molecule suitable for the initiation of homologous recombination. The AddA nuclease domain is required for chi fragment generation; this subunit has the helicase and 3' -&gt; 5' nuclease activities. This is ATP-dependent helicase/nuclease subunit A from Clostridium botulinum (strain Hall / ATCC 3502 / NCTC 13319 / Type A).